The following is a 511-amino-acid chain: Cytochrome P450 26B1 (511 aa).

Residue Cys440 participates in heme binding.

This sequence belongs to the cytochrome P450 family. The cofactor is heme.

It is found in the endoplasmic reticulum membrane. The protein resides in the microsome membrane. The catalysed reaction is all-trans-retinoate + reduced [NADPH--hemoprotein reductase] + O2 = all-trans-4-hydroxyretinoate + oxidized [NADPH--hemoprotein reductase] + H2O + H(+). It catalyses the reaction all-trans-retinoate + reduced [NADPH--hemoprotein reductase] + O2 = all-trans-18-hydroxyretinoate + oxidized [NADPH--hemoprotein reductase] + H2O + H(+). Functionally, a cytochrome P450 monooxygenase involved in the metabolism of retinoates (RAs), the active metabolites of vitamin A, and critical signaling molecules in animals. RAs exist as at least four different isomers: all-trans-RA (atRA), 9-cis-RA, 13-cis-RA, and 9,13-dicis-RA, where atRA is considered to be the biologically active isomer, although 9-cis-RA and 13-cis-RA also have activity. Catalyzes the hydroxylation of atRA primarily at C-4 and C-18, thereby contributing to the regulation of atRA homeostasis and signaling. Hydroxylation of atRA limits its biological activity and initiates a degradative process leading to its eventual elimination. Involved in the convertion of atRA to all-trans-4-oxo-RA. Can oxidize all-trans-13,14-dihydroretinoate (DRA) to metabolites which could include all-trans-4-oxo-DRA, all-trans-4-hydroxy-DRA, all-trans-5,8-epoxy-DRA, and all-trans-18-hydroxy-DRA. The protein is Cytochrome P450 26B1 (cyp26b1) of Xenopus tropicalis (Western clawed frog).